The sequence spans 308 residues: Porphobilinogen deaminase (308 aa).

At cysteine 240 the chain carries S-(dipyrrolylmethanemethyl)cysteine.

The protein belongs to the HMBS family. As to quaternary structure, monomer. Requires dipyrromethane as cofactor.

It catalyses the reaction 4 porphobilinogen + H2O = hydroxymethylbilane + 4 NH4(+). It functions in the pathway porphyrin-containing compound metabolism; protoporphyrin-IX biosynthesis; coproporphyrinogen-III from 5-aminolevulinate: step 2/4. In terms of biological role, tetrapolymerization of the monopyrrole PBG into the hydroxymethylbilane pre-uroporphyrinogen in several discrete steps. The sequence is that of Porphobilinogen deaminase from Campylobacter hominis (strain ATCC BAA-381 / DSM 21671 / CCUG 45161 / LMG 19568 / NCTC 13146 / CH001A).